Consider the following 499-residue polypeptide: MMVAWWSLFLYGLQVAAPALAATPADWRSQSIYFLLTDRFARTDGSTTATCNTADQKYCGGTWQGIIDKLDYIQGMGFTAIWITPVTAQLPQTTAYGDAYHGYWQQDIYSLNENYGTADDLKALSSALHERGMYLMVDVVANHMGYDGAGSSVDYSVFKPFSSQDYFHPFCFIQNYEDQTQVEDCWLGDNTVSLPDLDTTKDVVKNEWYDWVGSLVSNYSIDGLRIDTVKHVQKDFWPGYNKAAGVYCIGEVLDGDPAYTCPYQNVMDGVLNYPIYYPLLNAFKSTSGSMDDLYNMINTVKSDCPDSTLLGTFVENHDNPRFASYTNDIALAKNVAAFIILNDGIPIIYAGQEQHYAGGNDPANREATWLSGYPTDSELYKLIASRNAIRNYAISKDTGFVTYKNWPIYKDDTTIPMRKGTDGSQIVTILSNKGASGDSYTLSLSGAGYTAGQQLTEVIGCTTVTVGSDGNVPVPMAGGLPRVLYPTEKLAGSKICSSS.

Residues 1–21 form the signal peptide; it reads MMVAWWSLFLYGLQVAAPALA. A disulfide bond links cysteine 51 and cysteine 59. The substrate site is built by glutamine 56 and tryptophan 104. Asparagine 142 contributes to the Ca(2+) binding site. Histidine 143 is a binding site for substrate. Cysteine 171 and cysteine 185 are joined by a disulfide. Residues glutamate 183 and aspartate 196 each coordinate Ca(2+). Asparagine 218 carries an N-linked (GlcNAc...) asparagine glycan. Substrate is bound at residue arginine 225. Ca(2+) contacts are provided by aspartate 227, histidine 231, and glutamate 251. Aspartate 227 acts as the Nucleophile in catalysis. 230–231 is a substrate binding site; the sequence is KH. Residue glutamate 251 is the Proton donor of the active site. Glycine 255 contacts substrate. Cysteine 261 and cysteine 304 form a disulfide bridge. The substrate site is built by aspartate 318 and arginine 365. The cysteines at positions 461 and 496 are disulfide-linked.

The protein belongs to the glycosyl hydrolase 13 family. Ca(2+) serves as cofactor.

The enzyme catalyses Endohydrolysis of (1-&gt;4)-alpha-D-glucosidic linkages in polysaccharides containing three or more (1-&gt;4)-alpha-linked D-glucose units.. The sequence is that of Alpha-amylase B (amyB) from Aspergillus awamori (Black koji mold).